The chain runs to 190 residues: Shikimate kinase (190 aa).

An ATP-binding site is contributed by 19 to 24; it reads GSGKTT. Residue threonine 23 coordinates Mg(2+). 3 residues coordinate substrate: aspartate 41, arginine 65, and glycine 87. Arginine 124 is a binding site for ATP. Position 143 (arginine 143) interacts with substrate.

Belongs to the shikimate kinase family. Monomer. Mg(2+) serves as cofactor.

The protein localises to the cytoplasm. The catalysed reaction is shikimate + ATP = 3-phosphoshikimate + ADP + H(+). It participates in metabolic intermediate biosynthesis; chorismate biosynthesis; chorismate from D-erythrose 4-phosphate and phosphoenolpyruvate: step 5/7. Its function is as follows. Catalyzes the specific phosphorylation of the 3-hydroxyl group of shikimic acid using ATP as a cosubstrate. This Synechococcus sp. (strain ATCC 27144 / PCC 6301 / SAUG 1402/1) (Anacystis nidulans) protein is Shikimate kinase.